Reading from the N-terminus, the 271-residue chain is 4-hydroxy-tetrahydrodipicolinate reductase (271 aa).

NAD(+)-binding positions include 11–16 (GGSGRM) and Glu-37. An NADP(+)-binding site is contributed by Arg-38. NAD(+) contacts are provided by residues 101 to 103 (GTT) and 125 to 128 (APNM). Residue His-158 is the Proton donor/acceptor of the active site. Residue His-159 coordinates (S)-2,3,4,5-tetrahydrodipicolinate. The active-site Proton donor is Lys-162. 168-169 (GT) lines the (S)-2,3,4,5-tetrahydrodipicolinate pocket.

The protein belongs to the DapB family.

It is found in the cytoplasm. It catalyses the reaction (S)-2,3,4,5-tetrahydrodipicolinate + NAD(+) + H2O = (2S,4S)-4-hydroxy-2,3,4,5-tetrahydrodipicolinate + NADH + H(+). The enzyme catalyses (S)-2,3,4,5-tetrahydrodipicolinate + NADP(+) + H2O = (2S,4S)-4-hydroxy-2,3,4,5-tetrahydrodipicolinate + NADPH + H(+). Its pathway is amino-acid biosynthesis; L-lysine biosynthesis via DAP pathway; (S)-tetrahydrodipicolinate from L-aspartate: step 4/4. Its function is as follows. Catalyzes the conversion of 4-hydroxy-tetrahydrodipicolinate (HTPA) to tetrahydrodipicolinate. The chain is 4-hydroxy-tetrahydrodipicolinate reductase from Shewanella halifaxensis (strain HAW-EB4).